The primary structure comprises 354 residues: Peptide chain release factor 1 (354 aa).

The residue at position 232 (Gln-232) is an N5-methylglutamine.

The protein belongs to the prokaryotic/mitochondrial release factor family. Post-translationally, methylated by PrmC. Methylation increases the termination efficiency of RF1.

The protein resides in the cytoplasm. Its function is as follows. Peptide chain release factor 1 directs the termination of translation in response to the peptide chain termination codons UAG and UAA. This is Peptide chain release factor 1 from Phytoplasma australiense.